A 559-amino-acid chain; its full sequence is Putative ankyrin repeat protein RBE_0902 (559 aa).

ANK repeat units lie at residues 11 to 40, 46 to 75, 81 to 110, 158 to 189, 228 to 257, 263 to 292, 298 to 327, 333 to 364, 372 to 402, and 524 to 554; these read DGWT…EQAI, DGNT…DQAI, DGNT…TKQN, DDWT…VINH, NNDT…DQAI, YGNT…EQAI, QCDT…AINC, FGFT…EVII, and IDNN…WGLE.

This is Putative ankyrin repeat protein RBE_0902 from Rickettsia bellii (strain RML369-C).